Reading from the N-terminus, the 540-residue chain is PTS system alpha-glucoside-specific EIICB component (540 aa).

Residues 1–420 (MLSQIQRFGG…LNLKTPGREE (420 aa)) form the PTS EIIC type-1 domain. 11 helical membrane passes run 12–32 (MFTP…AIML), 87–107 (ACLA…AMGM), 130–150 (IAGI…SGLV), 174–194 (FVVI…LLGW), 201–221 (IESL…VYIF), 225–245 (ILIP…GPAV), 277–297 (FALH…ALYF), 307–327 (VAGL…TEPL), 329–349 (FTFL…AATM), 352–372 (VMYI…QFLP), and 384–404 (SMMF…FVVF). The 83-residue stretch at 448–530 (LGQAAGFLQA…ENLMKDSLST (83 aa)) folds into the PTS EIIB type-1 domain. Cysteine 470 (phosphocysteine intermediate; for EIIB activity) is an active-site residue.

The protein localises to the cell membrane. The phosphoenolpyruvate-dependent sugar phosphotransferase system (sugar PTS), a major carbohydrate active -transport system, catalyzes the phosphorylation of incoming sugar substrates concomitantly with their translocation across the cell membrane. This system is involved in alpha-glucoside transport. Functionally, involved in the transport and simultaneous phosphorylation at O-6 of the glucosyl moiety of sucrose and its five linkage-isomeric alpha-D-glucosyl-D-fructoses. Can also transport maltose, isomaltose and maltitol, phosphorylating at O-6 of their non-reducing glucose portion. The polypeptide is PTS system alpha-glucoside-specific EIICB component (aglA) (Klebsiella pneumoniae).